The following is a 294-amino-acid chain: Small ribosomal subunit protein uS2 (294 aa).

The span at 256–274 (SGKFIMDEDPDSKKTKTAE) shows a compositional bias: basic and acidic residues. Positions 256-294 (SGKFIMDEDPDSKKTKTAEEPSATIEPSTTTTVEVDQNE) are disordered. Over residues 280 to 294 (IEPSTTTTVEVDQNE) the composition is skewed to polar residues.

It belongs to the universal ribosomal protein uS2 family.

This is Small ribosomal subunit protein uS2 from Leptospira interrogans serogroup Icterohaemorrhagiae serovar Lai (strain 56601).